We begin with the raw amino-acid sequence, 419 residues long: MNTVIAFILIFGTLVFFHELGHLILAQRAGILCREFAIGFGPKIFSFKKNETVYTIRLLPIGGFVRMAGEDPEMIEVKPGYTVGLLFDSENKVEKIIINQKEKYPDALVIEVEQADLEHQMRITGYEHGNEDHLSSFSVSETSFFIVDGEEVQIAPYNRQFHSKTVWQRIKAIAAGPIMNFILAYVILVMLGLMQGVPSDEPVLGKLIDNGRAAEAGLQEGDRIQTINGENMRSWTDIVNTVREHPEKELKIVLMRDNVKLTKYVTPEAVKAGDETVGRFGAYNPVKTGVLTSISYGATETATVAQSIVTNLGKLVTGQFSIDMLAGPVGIYDMTDQVAKTGVINLLKLAAFLSINLGIVNLLPIPALDGGRLLFLFIEAIRGKPINREKEAFVVFIGVAFLMLLMLVVTWNDIQRLFL.

4 consecutive transmembrane segments (helical) span residues 4–24 (VIAF…GHLI), 173–193 (IAAG…MLGL), 349–369 (LAAF…PALD), and 391–411 (EAFV…VVTW). Residue His18 coordinates Zn(2+). Residue Glu19 is part of the active site. Zn(2+) is bound at residue His22. In terms of domain architecture, PDZ spans 184–269 (AYVILVMLGL…KLTKYVTPEA (86 aa)).

This sequence belongs to the peptidase M50B family. It depends on Zn(2+) as a cofactor.

The protein localises to the cell membrane. Functionally, is responsible for Site-2 cleavage of the RsiW anti-sigma factor. This results, after a third proteolytic step catalyzed by the ClpXP protease, in the release of SigW and the transcription activation of the genes under the control of the sigma-W factor. The protein is Zinc metalloprotease RasP (rasP) of Bacillus licheniformis (strain ATCC 14580 / DSM 13 / JCM 2505 / CCUG 7422 / NBRC 12200 / NCIMB 9375 / NCTC 10341 / NRRL NRS-1264 / Gibson 46).